The following is a 97-amino-acid chain: Histone H1.C2 (97 aa).

The disordered stretch occupies residues 24–97 (AAVPPKKAAP…KKAVKKAPKK (74 aa)). Residues 31–97 (AAPKKAVAKK…KKAVKKAPKK (67 aa)) show a composition bias toward basic residues.

The protein resides in the nucleus. It is found in the chromosome. The sequence is that of Histone H1.C2 from Trypanosoma cruzi.